The chain runs to 929 residues: Protein transport protein Sec16B (929 aa).

Over residues 1 to 10 (MEPWDPPQLP) the composition is skewed to pro residues. A disordered region spans residues 1 to 64 (MEPWDPPQLP…RPASQAESYE (64 aa)). Positions 228–669 (APHKFLQPHV…LRTYCQHCQV (442 aa)) are central conserved domain (CCD); required for localization to endoplasmic reticulum exit sites. Disordered regions lie at residues 675–727 (PEVA…QDVS) and 781–929 (LSTR…PNPL). Residues 694–710 (EMVHEQPHSDGPHDEQW) show a composition bias toward basic and acidic residues. A compositionally biased stretch (low complexity) spans 781–795 (LSTRARSASESSTAS). The segment covering 838-848 (PKATTSGSPTP) has biased composition (polar residues). Over residues 856–871 (PSPPGAVPSAQPPASP) the composition is skewed to pro residues.

This sequence belongs to the SEC16 family. SEC16A and SEC16B are each present in multiple copies in a heteromeric complex.

The protein resides in the endoplasmic reticulum membrane. The protein localises to the golgi apparatus membrane. In terms of biological role, plays a role in the organization of the endoplasmic reticulum exit sites (ERES), also known as transitional endoplasmic reticulum (tER). Required for secretory cargo traffic from the endoplasmic reticulum to the Golgi apparatus. Involved in peroxisome biogenesis. Regulates the transport of peroxisomal biogenesis factors PEX3 and PEX16 from the ER to peroxisomes. The sequence is that of Protein transport protein Sec16B (SEC16B) from Gallus gallus (Chicken).